The primary structure comprises 180 residues: Large ribosomal subunit protein uL5 (180 aa).

Belongs to the universal ribosomal protein uL5 family. As to quaternary structure, part of the 50S ribosomal subunit; part of the 5S rRNA/L5/L18/L25 subcomplex. Contacts the 5S rRNA and the P site tRNA. Forms a bridge to the 30S subunit in the 70S ribosome.

Its function is as follows. This is one of the proteins that bind and probably mediate the attachment of the 5S RNA into the large ribosomal subunit, where it forms part of the central protuberance. In the 70S ribosome it contacts protein S13 of the 30S subunit (bridge B1b), connecting the 2 subunits; this bridge is implicated in subunit movement. Contacts the P site tRNA; the 5S rRNA and some of its associated proteins might help stabilize positioning of ribosome-bound tRNAs. The sequence is that of Large ribosomal subunit protein uL5 from Streptococcus pneumoniae (strain JJA).